The following is a 272-amino-acid chain: NH(3)-dependent NAD(+) synthetase (272 aa).

Residue 43-50 (GLSGGQDS) coordinates ATP. Residue Asp-49 coordinates Mg(2+). Arg-138 contacts deamido-NAD(+). Thr-158 lines the ATP pocket. Position 163 (Glu-163) interacts with Mg(2+). Positions 171 and 178 each coordinate deamido-NAD(+). Positions 187 and 209 each coordinate ATP. Residue 258–259 (HK) participates in deamido-NAD(+) binding.

It belongs to the NAD synthetase family. Homodimer.

The catalysed reaction is deamido-NAD(+) + NH4(+) + ATP = AMP + diphosphate + NAD(+) + H(+). The protein operates within cofactor biosynthesis; NAD(+) biosynthesis; NAD(+) from deamido-NAD(+) (ammonia route): step 1/1. Functionally, catalyzes the ATP-dependent amidation of deamido-NAD to form NAD. Uses ammonia as a nitrogen source. The sequence is that of NH(3)-dependent NAD(+) synthetase from Halalkalibacterium halodurans (strain ATCC BAA-125 / DSM 18197 / FERM 7344 / JCM 9153 / C-125) (Bacillus halodurans).